The chain runs to 152 residues: Acidic phospholipase A2 57 (152 aa).

The first 21 residues, 1–21 (MYPAHLLGLLAVCVSLLGAAS), serve as a signal peptide directing secretion. Residues 22 to 27 (IPPLPL) constitute a propeptide that is removed on maturation. Intrachain disulfides connect cysteine 38-cysteine 104, cysteine 54-cysteine 151, cysteine 56-cysteine 72, cysteine 71-cysteine 132, cysteine 78-cysteine 125, cysteine 88-cysteine 118, and cysteine 111-cysteine 123. Ca(2+) is bound by residues tyrosine 55, glycine 57, and glycine 59. The active site involves histidine 75. Aspartate 76 is a Ca(2+) binding site. Aspartate 126 is an active-site residue.

The protein belongs to the phospholipase A2 family. Group I subfamily. D49 sub-subfamily. Ca(2+) is required as a cofactor. In terms of tissue distribution, expressed by the venom gland.

It localises to the secreted. It carries out the reaction a 1,2-diacyl-sn-glycero-3-phosphocholine + H2O = a 1-acyl-sn-glycero-3-phosphocholine + a fatty acid + H(+). Its function is as follows. PLA2 catalyzes the calcium-dependent hydrolysis of the 2-acyl groups in 3-sn-phosphoglycerides. The sequence is that of Acidic phospholipase A2 57 from Hydrophis hardwickii (Hardwick's spine-bellied seasnake).